The following is a 360-amino-acid chain: Malonyl CoA-acyl carrier protein transacylase, mitochondrial (360 aa).

The transit peptide at M1 to N24 directs the protein to the mitochondrion. Active-site residues include S105 and H235.

It belongs to the FabD family.

The protein localises to the mitochondrion. It catalyses the reaction holo-[ACP] + malonyl-CoA = malonyl-[ACP] + CoA. The protein operates within lipid metabolism; fatty acid biosynthesis. Involved in biosynthesis of fatty acids in mitochondria. The chain is Malonyl CoA-acyl carrier protein transacylase, mitochondrial (MCT1) from Saccharomyces cerevisiae (strain ATCC 204508 / S288c) (Baker's yeast).